The primary structure comprises 141 residues: Small ribosomal subunit protein eS17w (141 aa).

It belongs to the eukaryotic ribosomal protein eS17 family.

The chain is Small ribosomal subunit protein eS17w (RPS17D) from Arabidopsis thaliana (Mouse-ear cress).